A 96-amino-acid chain; its full sequence is YcgL domain-containing protein Csal_1462 (96 aa).

The region spanning 4 to 88 is the YcgL domain; the sequence is RLCEIFKSPR…ARESYLLDLY (85 aa).

This Chromohalobacter salexigens (strain ATCC BAA-138 / DSM 3043 / CIP 106854 / NCIMB 13768 / 1H11) protein is YcgL domain-containing protein Csal_1462.